The following is a 118-amino-acid chain: Small ribosomal subunit protein uS13 (118 aa).

The interval K93–K118 is disordered.

The protein belongs to the universal ribosomal protein uS13 family. In terms of assembly, part of the 30S ribosomal subunit. Forms a loose heterodimer with protein S19. Forms two bridges to the 50S subunit in the 70S ribosome.

In terms of biological role, located at the top of the head of the 30S subunit, it contacts several helices of the 16S rRNA. In the 70S ribosome it contacts the 23S rRNA (bridge B1a) and protein L5 of the 50S subunit (bridge B1b), connecting the 2 subunits; these bridges are implicated in subunit movement. Contacts the tRNAs in the A and P-sites. The protein is Small ribosomal subunit protein uS13 of Ectopseudomonas mendocina (strain ymp) (Pseudomonas mendocina).